The following is a 1758-amino-acid chain: Collagen alpha-2(IV) chain (1758 aa).

The first 26 residues, 1–26 (MKQRAALGPVLRLAILALLAVSYVQS), serve as a signal peptide directing secretion. Residues 27–42 (QATCRDCSNRGCFCVG) form a 7S domain region. A triple-helical region region spans residues 42-1527 (GEKGSMGAPG…PGAPGAAGPA (1486 aa)). A compositionally biased stretch (low complexity) spans 47-62 (MGAPGPQGPPGTQGIR). Disordered stretches follow at residues 47 to 943 (MGAP…GAPG), 955 to 1304 (GVPG…GLPG), 1316 to 1339 (GFPGAKGDLGANGIPGKRGEDGLP), and 1367 to 1525 (GFPG…GAAG). Gly residues predominate over residues 102-111 (GNDGGNGRPG). A compositionally biased stretch (pro residues) spans 134–149 (PGRPGPPGMPGFPGPP). Residues 189-198 (YPGEKGDRGD) show a composition bias toward basic and acidic residues. Positions 224 to 234 (PKGDPGDLGSV) are enriched in low complexity. An O-linked (Xyl...) (glycosaminoglycan) serine glycan is attached at Ser248. Basic and acidic residues predominate over residues 258 to 267 (PGEKGDKGEP). Over residues 268–283 (GEGGQRGYPGNGGLSG) the composition is skewed to gly residues. A compositionally biased stretch (pro residues) spans 367-382 (PGPPGLPGRPGNPGPP). Over residues 398–407 (GNTGGPGLPG) the composition is skewed to gly residues. Low complexity-rich tracts occupy residues 408–417 (YPGNEGLPGP) and 429–439 (APGVSGPSGIP). Positions 464–479 (KDGKPGLDGAPGRKGE) are enriched in basic and acidic residues. 2 stretches are compositionally biased toward low complexity: residues 495–509 (GLPGAPGQRGAPGPN) and 568–584 (PVGDAGDDGLPGPAGRP). Pro residues predominate over residues 638–648 (PSGPVGPPGAP). 3 stretches are compositionally biased toward gly residues: residues 693–702 (GAKGDGGLPG), 737–746 (GTKGEGGYPG), and 782–791 (GDKGFGGVPG). Over residues 839-858 (LPGLPGTPGLEGQRGFPGAP) the composition is skewed to low complexity. The segment covering 859–868 (GLKGGDGLPG) has biased composition (gly residues). Residues 929–938 (APGQSGAPGL) show a composition bias toward low complexity. Over residues 958–967 (GFKGDGGLPG) the composition is skewed to gly residues. Low complexity predominate over residues 968–980 (LPGLNGPKGEPGV). The span at 988-997 (GMKGNGGLPG) shows a compositional bias: gly residues. Residues 1040 to 1056 (LPGQPGLRGPQGPSGLP) show a composition bias toward low complexity. Gly residues predominate over residues 1194-1203 (GLPGLGGEKG). Over residues 1237 to 1250 (FPGQPGQEGLPGLS) the composition is skewed to low complexity. Gly residues predominate over residues 1251 to 1260 (GEKGMGGLPG). Over residues 1373 to 1382 (GLKGEGGLPG) the composition is skewed to gly residues. Low complexity-rich tracts occupy residues 1413 to 1425 (LPGRDGLPGADGP) and 1433 to 1454 (GPQNLVEPGEKGLPGLPGAPGL). 2 stretches are compositionally biased toward gly residues: residues 1492–1501 (GEKGMGGLPG) and 1507–1516 (GQPGGPGAPG). Positions 1531-1754 (GFVLVKHSQT…SRCQVCVKST (224 aa)) constitute a Collagen IV NC1 domain. 6 disulfides stabilise this stretch: Cys1546/Cys1635, Cys1579/Cys1632, Cys1591/Cys1597, Cys1654/Cys1750, Cys1688/Cys1747, and Cys1700/Cys1707.

This sequence belongs to the type IV collagen family. Trimers of two alpha 1(IV) and one alpha 2(IV) chain. Type IV collagen forms a mesh-like network linked through intermolecular interactions between 7S domains and between NC1 domains. Post-translationally, prolines at the third position of the tripeptide repeating unit (G-X-Y) are hydroxylated in some or all of the chains. In terms of processing, type IV collagens contain numerous cysteine residues which are involved in inter- and intramolecular disulfide bonding. 12 of these, located in the NC1 domain, are conserved in all known type IV collagens. The trimeric structure of the NC1 domains is stabilized by covalent bonds between Lys and Met residues. As to expression, localizes to the basement membrane between distal tip cells and the germline. Localizes to the intestinal basement membrane.

It is found in the secreted. It localises to the extracellular space. Its subcellular location is the extracellular matrix. The protein resides in the basement membrane. Its function is as follows. Collagen type IV is specific for basement membranes. Together with fbl-1 and downstream of metalloprotease mig-17, recruits nidogen nid-1 to the gonad basement membrane thereby probably inducing basement membrane remodeling required for the directional migration of distal tip cells. Required to restrict presynaptic growth at the neuromuscular junctions in late larval stage and in adult motor neurons. Vital for embryonic development. The chain is Collagen alpha-2(IV) chain from Caenorhabditis elegans.